Consider the following 165-residue polypeptide: Type IV major pilin protein PilE1 (165 aa).

A propeptide spans 1–7 (MNTLQKG) (leader sequence). Residue phenylalanine 8 is modified to N-methylphenylalanine. A helical transmembrane segment spans residues 8–28 (FTLIELMIVIAIVGILAAVAL). O-linked (DADDGlc) serine glycosylation is present at serine 70. An O-(2-aminoethylphosphoryl)serine; alternate modification is found at serine 75. The residue at position 75 (serine 75) is an O-(2-cholinephosphoryl)serine; alternate. Position 75 is a phosphoserine; alternate (serine 75). Residue serine 101 is modified to O-(sn-1-glycerophosphoryl)serine; partial. Cysteines 128 and 158 form a disulfide. A compositionally biased stretch (basic and acidic residues) spans 137-153 (DDTVADAKDGKEIDTKH). Residues 137 to 165 (DDTVADAKDGKEIDTKHLPSTCRDNFDAK) form a disordered region.

This sequence belongs to the N-Me-Phe pilin family. The pili are polar flexible filaments of about 5.4 nanometers diameter and 2.5 micrometers average length; they consist of only a single polypeptide chain arranged in a helical configuration of five subunits per turn in the assembled pilus. Post-translationally, the O-linked glycan identified as Gal-GlcNAc disaccharide in PubMed:7477282 and PubMed:10048019 is now identified as either a hexosyl-diacetamidotrideoxyhexoside (DATDHex) by mass spectrometry in PubMed:15249686, or alpha-D-galactopyranosyl-(1-&gt;3)-2,4-diacetamido-2,4-dideoxy-beta-D-glucopyranoside (DADDGlc) by X-ray diffraction in PubMed:16949362. It is not clear whether there is a chemical difference in the glycosylation of the two derivatives of strain MS11 used in these experiments, or not. In some MS11 derivative strains, Ser-75 is modified to O-(2-aminoethylphosphoryl)serine, and in some other derivatives that can be secondarily modified to O-(2-cholinephosphoryl)serine by N-methylation.

The protein localises to the fimbrium. Its subcellular location is the membrane. Major component of the type IV pilus (T4P) that plays a role in cellular adherence, microcolony formation, resistance to neutrophil mediated killing, twitching motility as well as transformation. Mediates the attachment and the formation of bacterial microcolonies on host epithelial cells. Mechanistically, pili retractation induces host NF-kappa-B activation in infected cells, which is temporally associated with the formation of gonococcal microcolonies. This chain is Type IV major pilin protein PilE1 (pilE1), found in Neisseria gonorrhoeae.